The chain runs to 340 residues: MNICVNSLYRLSIPQFHSLYTEEVSDEALTLLFSAVENGDQNCIDLLCNLALRNDDLGHRVEKFLFDLFSGKRTGSSDIDKKINQACLVLHQIANNDITKDNTEWKKLHAPSRLLYMAGSATTDLSKKIGIAHKIMGDQFAQTDQEQVGVENLWCGARMLSSDELAAATQGLVQESPLLSVNYPIGLIHPTTKENILSTQLLEKIAQSGLSHNEVFLVNTGDHWLLCLFYKLAEKIKCLIFNTYYDLNENTKQEIIEAAKIAGISESDEVNFIEMNLQNNVPNGCGLFCYHTIQLLSNAGQNDPATTLREFAENFLTLSVEEQALFNTQTRRQIYEYSLQ.

His223 is a catalytic residue. The Nucleophile role is filled by Cys285.

The protein belongs to the peptidase C79 family.

Its subcellular location is the secreted. It localises to the host cytoplasm. In terms of biological role, effector proteins function to alter host cell physiology and promote bacterial survival in host tissues. This protease targets the host cell ubiquitin pathway by acting as a deubiquitinase in infected host cells. Specifically hydrolyzes mono- and polyubiquitin substrates in vitro with a preference for 'Lys-63'-linked ubiquitin chains, suggesting that it interferes with a signaling pathway rather than inhibiting proteasomal-dependent degradation of its targets. Does not possess desumoylating activity. Is required for the Salmonella-induced delayed cytotoxicity in macrophages and full virulence. Is not required for intracellular bacterial replication. This is Deubiquitinase SseL (sseL) from Salmonella typhimurium (strain LT2 / SGSC1412 / ATCC 700720).